Consider the following 367-residue polypeptide: 7,8-didemethyl-8-hydroxy-5-deazariboflavin synthase (367 aa).

The Radical SAM core domain maps to 39–275 (LTFARNVFVP…AEVGVQVPPN (237 aa)). [4Fe-4S] cluster is bound by residues C53, C57, and C60.

Belongs to the radical SAM superfamily. CofG family. Consists of two subunits, CofG and CofH. It depends on [4Fe-4S] cluster as a cofactor.

The catalysed reaction is 5-amino-5-(4-hydroxybenzyl)-6-(D-ribitylimino)-5,6-dihydrouracil + S-adenosyl-L-methionine = 7,8-didemethyl-8-hydroxy-5-deazariboflavin + 5'-deoxyadenosine + L-methionine + NH4(+) + H(+). Its pathway is cofactor biosynthesis; coenzyme F0 biosynthesis. Functionally, catalyzes the radical-mediated synthesis of 7,8-didemethyl-8-hydroxy-5-deazariboflavin from 5-amino-5-(4-hydroxybenzyl)-6-(D-ribitylimino)-5,6-dihydrouracil. The protein is 7,8-didemethyl-8-hydroxy-5-deazariboflavin synthase of Halobacterium salinarum (strain ATCC 29341 / DSM 671 / R1).